The chain runs to 376 residues: MAVSKFVQIRRDLHKIPEIGFKEWKTQQYILDYIGTLSNEHVEVKVWRTGVIVKVKGKNPEKVIGYRADIDGLPITEETGYEFASVHEGMMHACGHDLHTTIGLGLLTAAVTERIDDDLVFLFQPAEEGPGGALPMLESEELKEWKPNIILGLHIAPEYPVGTIATKEGLLFANTSELYVDLKGKGGHAAYPHTANDMIVAASHLVTQLQSVISRNVNPLDSAVITIGKITGGTVQNIIAEKSRLEGTIRTLSVESMSRVKSRIEAIVAGIEASFQCEAVIDYGAMYHQVYNHEALTREFMQFVSEQTDMKVITCTEAMTGEDFGYMLQEIPGFMFWLGVNSEYGLHHAKLKPDEEAIEKAIVFLDQYVKWKGTRK.

Aspartate 69 is an active-site residue. The active-site Proton acceptor is glutamate 128.

This sequence belongs to the peptidase M20A family. N-acetyldiaminopimelate deacetylase subfamily.

It catalyses the reaction N-acetyl-(2S,6S)-2,6-diaminopimelate + H2O = (2S,6S)-2,6-diaminopimelate + acetate. Its pathway is amino-acid biosynthesis; L-lysine biosynthesis via DAP pathway; LL-2,6-diaminopimelate from (S)-tetrahydrodipicolinate (acetylase route): step 3/3. In terms of biological role, catalyzes the conversion of N-acetyl-diaminopimelate to diaminopimelate and acetate. The polypeptide is N-acetyldiaminopimelate deacetylase (Bacillus cereus (strain AH820)).